A 749-amino-acid chain; its full sequence is Fibronectin type III and SPRY domain-containing protein 2 (749 aa).

Positions 205–317 (LNEALESAKD…TIEEMCHEEK (113 aa)) form a coiled coil. Fibronectin type-III domains lie at 375–470 (PVIN…TAPS) and 471–564 (PPII…TIGS). The region spanning 546-744 (NMGGPSVRSE…KVHNGISMPK (199 aa)) is the B30.2/SPRY domain.

Interacts with CMYA5. In cardiac muscles, identified in a complex composed of FSD2, CMYA5 and RYR2.

Its subcellular location is the nucleus. It is found in the sarcoplasmic reticulum. It localises to the cytoplasm. The protein resides in the perinuclear region. The protein is Fibronectin type III and SPRY domain-containing protein 2 (FSD2) of Homo sapiens (Human).